A 604-amino-acid polypeptide reads, in one-letter code: Prostaglandin G/H synthase 2 (604 aa).

Residues 1 to 17 form the signal peptide; that stretch reads MLARALLLCAALALGQA. An EGF-like domain is found at 18-55; it reads ANPCCSNPCQNRGECLSVGFDRYKCDCTRTGYYGENCT. Disulfide bonds link Cys-21-Cys-32, Cys-22-Cys-145, Cys-26-Cys-42, and Cys-44-Cys-54. An N-linked (GlcNAc...) asparagine glycan is attached at Asn-53. Residue Arg-106 coordinates substrate. Residue Asn-130 is glycosylated (N-linked (GlcNAc...) asparagine). The active-site Proton acceptor is His-193. Tyr-341 contributes to the substrate binding site. Tyr-371 (for cyclooxygenase activity) is an active-site residue. Heme b is bound at residue His-374. The N-linked (GlcNAc...) asparagine glycan is linked to Asn-396. S-nitrosocysteine is present on Cys-526. Cys-555 and Cys-561 are disulfide-bonded. N-linked (GlcNAc...) asparagine glycosylation is present at Asn-580.

This sequence belongs to the prostaglandin G/H synthase family. In terms of assembly, homodimer. Requires heme b as cofactor. Post-translationally, S-nitrosylation by NOS2 (iNOS) activates enzyme activity. S-nitrosylation may take place on different Cys residues in addition to Cys-526.

Its subcellular location is the microsome membrane. The protein resides in the endoplasmic reticulum membrane. The protein localises to the nucleus inner membrane. It is found in the nucleus outer membrane. The enzyme catalyses (5Z,8Z,11Z,14Z)-eicosatetraenoate + AH2 + 2 O2 = prostaglandin H2 + A + H2O. It catalyses the reaction (5Z,8Z,11Z,14Z)-eicosatetraenoate + 2 O2 = prostaglandin G2. The catalysed reaction is prostaglandin G2 + AH2 = prostaglandin H2 + A + H2O. It carries out the reaction (5Z,8Z,11Z,14Z,17Z)-eicosapentaenoate + 2 O2 = prostaglandin G3. The enzyme catalyses prostaglandin G3 + AH2 = prostaglandin H3 + A + H2O. It catalyses the reaction (8Z,11Z,14Z)-eicosatrienoate + 2 O2 = prostaglandin G1. The catalysed reaction is prostaglandin G1 + AH2 = prostaglandin H1 + A + H2O. It carries out the reaction 2-(5Z,8Z,11Z,14Z)-eicosatetraenoyl-sn-glycero-3-phosphoethanolamine + 2 O2 = 2-(prostaglandin G2)-sn-glycero-3-phosphoethanolamine. The enzyme catalyses 2-(prostaglandin G2)-sn-glycero-3-phosphoethanolamine + AH2 = 2-(prostaglandin H2)-sn-glycero-3-phosphoethanolamine + A + H2O. It catalyses the reaction 2-(5Z,8Z,11Z,14Z)-eicosatetraenoyl-sn-glycero-3-phosphocholine + 2 O2 = 2-(prostaglandin G2)-sn-glycero-3-phosphocholine. The catalysed reaction is 2-(prostaglandin G2)-sn-glycero-3-phosphocholine + AH2 = 2-(prostaglandin H2)-sn-glycero-3-phosphocholine + A + H2O. It carries out the reaction (15S)-hydroperoxy-(5Z,8Z,11Z,13E)-eicosatetraenoate + AH2 = (15S)-hydroxy-(5Z,8Z,11Z,13E)-eicosatetraenoate + A + H2O. The enzyme catalyses 2-(5Z,8Z,11Z,14Z)-eicosatetraenoyl-sn-glycero-3-phosphocholine + AH2 + O2 = 2-[(15S)-hydroxy-(5Z,8Z,11Z,13E)-eicosatetraenoyl]-sn-glycero-3-phosphocholine + A + H2O. It catalyses the reaction 2-(5Z,8Z,11Z,14Z)-eicosatetraenoyl-sn-glycero-3-phosphocholine + AH2 + O2 = 2-[(15R)-hydroxy-(5Z,8Z,11Z,13E)-eicosatetraenoyl]-sn-glycero-3-phosphocholine + A + H2O. The catalysed reaction is 2-(5Z,8Z,11Z,14Z)-eicosatetraenoyl-sn-glycero-3-phosphocholine + AH2 + O2 = 2-[(11R)-hydroxy-(5Z,8Z,12E,14Z)-eicosatetraenoyl]-sn-glycero-3-phosphocholine + A + H2O. It carries out the reaction (9Z,12Z)-octadecadienoate + AH2 + O2 = 9-hydroxy-(10E,12Z)-octadecadienoate + A + H2O. The enzyme catalyses (9Z,12Z)-octadecadienoate + AH2 + O2 = 13-hydroxy-(9Z,11E)-octadecadienoate + A + H2O. It catalyses the reaction (5Z,8Z,11Z,14Z)-eicosatetraenoate + AH2 + O2 = (15R)-hydroxy-(5Z,8Z,11Z,13E)-eicosatetraenoate + A + H2O. The catalysed reaction is (5Z,8Z,11Z,14Z)-eicosatetraenoate + AH2 + O2 = (11R)-hydroxy-(5Z,8Z,12E,14Z)-eicosatetraenoate + A + H2O. It carries out the reaction (5Z,8Z,11Z,14Z,17Z)-eicosapentaenoate + AH2 + O2 = (11R)-hydroxy-(5Z,8Z,12E,14Z,17Z)-eicosapentaenoate + A + H2O. The enzyme catalyses (5Z,8Z,11Z,14Z,17Z)-eicosapentaenoate + AH2 + O2 = (18S)-hydroxy-(5Z,8Z,11Z,14Z,16E)-eicosapentaenoate + A + H2O. It catalyses the reaction (5Z,8Z,11Z,14Z,17Z)-eicosapentaenoate + AH2 + O2 = (18R)-hydroxy-(5Z,8Z,11Z,14Z,16E)-eicosapentaenoate + A + H2O. The catalysed reaction is (5Z,8Z,11Z,14Z,17Z)-eicosapentaenoate + AH2 + O2 = (15R)-hydroxy-(5Z,8Z,11Z,13E,17Z)-eicosapentaenoate + A + H2O. It carries out the reaction (5Z,8Z,11Z,14Z,17Z)-eicosapentaenoate + AH2 + O2 = (15S)-hydroxy-(5Z,8Z,11Z,13E,17Z)-eicosapentaenoate + A + H2O. The enzyme catalyses (7Z,10Z,13Z,16Z,19Z)-docosapentaenoate + AH2 + O2 = 13R-hydroxy-(7Z,10Z,14E,16Z,19Z)-docosapentaenoate + A + H2O. It catalyses the reaction (4Z,7Z,10Z,13Z,16Z,19Z)-docosahexaenoate + AH2 + O2 = 13-hydroxy-(4Z,7Z,10Z,14E,16Z,19Z)-docosahexaenoate + A + H2O. The catalysed reaction is (5S)-hydroxy-(6E,8Z,11Z,14Z)-eicosatetraenoate + AH2 + O2 = (5S,15R)-dihydroxy-(6E,8Z,11Z,13E)-eicosatetraenoate + A + H2O. It carries out the reaction (4Z,7Z,10Z,13Z,16Z,19Z)-docosahexaenoate + AH2 + O2 = 17R-hydroxy-(4Z,7Z,10Z,13Z,15E,19Z)-docosahexaenoate + A + H2O. The enzyme catalyses (5S)-hydroxy-(6E,8Z,11Z,14Z)-eicosatetraenoate + AH2 + O2 = (5S,15S)-dihydroxy-(6E,8Z,11Z,13E)-eicosatetraenoate + A + H2O. It catalyses the reaction (5S)-hydroxy-(6E,8Z,11Z,14Z)-eicosatetraenoate + AH2 + O2 = (5S,11R)-dihydroxy-(6E,8Z,12E,14Z)-eicosatetraenoate + A + H2O. The catalysed reaction is 2-(5Z,8Z,11Z,14Z-eicosatetraenoyl)-glycerol + 2 O2 = 2-glyceryl-prostaglandin G2. It carries out the reaction 2-glyceryl-prostaglandin G2 + AH2 = 2-glyceryl-prostaglandin H2 + A + H2O. The enzyme catalyses (5Z,8Z,11Z,14Z)-eicosatetraenoate + O2 = (15R)-hydroperoxy-(5Z,8Z,11Z,13E)-eicosatetraenoate. It catalyses the reaction (5Z,8Z,11Z,14Z)-eicosatetraenoate + O2 = 11R-hydroperoxy-(5Z,8Z,12E,14Z)-eicosatetraenoate. The catalysed reaction is (9Z,12Z)-octadecadienoate + AH2 + O2 = (9R)-hydroxy-(10E,12Z)-octadecadienoate + A + H2O. It carries out the reaction (9Z,12Z)-octadecadienoate + AH2 + O2 = (9S)-hydroxy-(10E,12Z)-octadecadienoate + A + H2O. The enzyme catalyses (9Z,12Z)-octadecadienoate + AH2 + O2 = (13S)-hydroxy-(9Z,11E)-octadecadienoate + A + H2O. It catalyses the reaction (9Z,12Z)-octadecadienoate + AH2 + O2 = (13R)-hydroxy-(9Z,11E)-octadecadienoate + A + H2O. It functions in the pathway lipid metabolism; prostaglandin biosynthesis. In terms of biological role, dual cyclooxygenase and peroxidase in the biosynthesis pathway of prostanoids, a class of C20 oxylipins mainly derived from arachidonate ((5Z,8Z,11Z,14Z)-eicosatetraenoate, AA, C20:4(n-6)), with a particular role in the inflammatory response. The cyclooxygenase activity oxygenates AA to the hydroperoxy endoperoxide prostaglandin G2 (PGG2), and the peroxidase activity reduces PGG2 to the hydroxy endoperoxide prostaglandin H2 (PGH2), the precursor of all 2-series prostaglandins and thromboxanes. This complex transformation is initiated by abstraction of hydrogen at carbon 13 (with S-stereochemistry), followed by insertion of molecular O2 to form the endoperoxide bridge between carbon 9 and 11 that defines prostaglandins. The insertion of a second molecule of O2 (bis-oxygenase activity) yields a hydroperoxy group in PGG2 that is then reduced to PGH2 by two electrons. Similarly catalyzes successive cyclooxygenation and peroxidation of dihomo-gamma-linoleate (DGLA, C20:3(n-6)) and eicosapentaenoate (EPA, C20:5(n-3)) to corresponding PGH1 and PGH3, the precursors of 1- and 3-series prostaglandins. In an alternative pathway of prostanoid biosynthesis, converts 2-arachidonoyl lysophopholipids to prostanoid lysophopholipids, which are then hydrolyzed by intracellular phospholipases to release free prostanoids. Metabolizes 2-arachidonoyl glycerol yielding the glyceryl ester of PGH2, a process that can contribute to pain response. Generates lipid mediators from n-3 and n-6 polyunsaturated fatty acids (PUFAs) via a lipoxygenase-type mechanism. Oxygenates PUFAs to hydroperoxy compounds and then reduces them to corresponding alcohols. Plays a role in the generation of resolution phase interaction products (resolvins) during both sterile and infectious inflammation. Metabolizes docosahexaenoate (DHA, C22:6(n-3)) to 17R-HDHA, a precursor of the D-series resolvins (RvDs). As a component of the biosynthetic pathway of E-series resolvins (RvEs), converts eicosapentaenoate (EPA, C20:5(n-3)) primarily to 18S-HEPE that is further metabolized by ALOX5 and LTA4H to generate 18S-RvE1 and 18S-RvE2. In vascular endothelial cells, converts docosapentaenoate (DPA, C22:5(n-3)) to 13R-HDPA, a precursor for 13-series resolvins (RvTs) shown to activate macrophage phagocytosis during bacterial infection. In activated leukocytes, contributes to oxygenation of hydroxyeicosatetraenoates (HETE) to diHETES (5,15-diHETE and 5,11-diHETE). Can also use linoleate (LA, (9Z,12Z)-octadecadienoate, C18:2(n-6)) as substrate and produce hydroxyoctadecadienoates (HODEs) in a regio- and stereospecific manner, being (9R)-HODE ((9R)-hydroxy-(10E,12Z)-octadecadienoate) and (13S)-HODE ((13S)-hydroxy-(9Z,11E)-octadecadienoate) its major products. During neuroinflammation, plays a role in neuronal secretion of specialized preresolving mediators (SPMs) 15R-lipoxin A4 that regulates phagocytic microglia. This Cavia porcellus (Guinea pig) protein is Prostaglandin G/H synthase 2 (PTGS2).